A 271-amino-acid chain; its full sequence is Ubiquitin thioesterase OTUB1 (271 aa).

A2 carries the N-acetylalanine modification. S16 is subject to Phosphoserine. Y26 carries the post-translational modification Phosphotyrosine. One can recognise an OTU domain in the interval 80 to 271 (SYIRKTRPDG…RPGHYDILYK (192 aa)). Residue D88 is part of the active site. C91 functions as the Nucleophile in the catalytic mechanism. Ubiquitin-conjugating enzyme E2 binding stretches follow at residues 130–138 (FTEFTIEDF) and 169–177 (DYLVVYLRL). Residues 189–195 (FFEHFIE) form a free ubiquitin binding region. Residues 206–213 (QEVEPMCK) are ubiquitin-conjugating enzyme E2 binding. 2 free ubiquitin binding regions span residues 214–221 (ESDHIHII) and 245–251 (NPHVFPE). The active site involves H265.

This sequence belongs to the peptidase C65 family. In terms of assembly, interacts with RNF128. Forms a ternary complex with RNF128 and USP8. Interacts with FUS and RACK1. Interacts with UBE2D1/UBCH5A, UBE2W/UBC16 and UBE2N/UBC13. Phosphorylation at Tyr-26 by SRC and SRMS promotes deubiquitination of RPTOR via a non-catalytic process.

It is found in the cytoplasm. It catalyses the reaction Thiol-dependent hydrolysis of ester, thioester, amide, peptide and isopeptide bonds formed by the C-terminal Gly of ubiquitin (a 76-residue protein attached to proteins as an intracellular targeting signal).. With respect to regulation, by free ubiquitin: binding of free ubiquitin triggers conformational changes in the OTU domain and formation of a ubiquitin-binding helix in the N-terminus, promoting binding of the conjugated donor ubiquitin in UBE2N/UBC13 to OTUB1. In terms of biological role, hydrolase that can specifically remove compared to 'Lys-48'-linked conjugated ubiquitin from proteins and plays an important regulatory role at the level of protein turnover by preventing degradation. Regulator of T-cell anergy, a phenomenon that occurs when T-cells are rendered unresponsive to antigen rechallenge and no longer respond to their cognate antigen. Acts via its interaction with RNF128/GRAIL. Surprisingly, it regulates RNF128-mediated ubiquitination, but does not deubiquitinate polyubiquitinated RNF128. Deubiquitinates estrogen receptor alpha (ESR1). Mediates deubiquitination of 'Lys-48'-linked polyubiquitin chains, but not 'Lys-63'-linked polyubiquitin chains. Not able to cleave di-ubiquitin. Also capable of removing NEDD8 from NEDD8 conjugates, but with a much lower preference compared to 'Lys-48'-linked ubiquitin. Its function is as follows. Plays a key non-catalytic role in DNA repair regulation by inhibiting activity of RNF168, an E3 ubiquitin-protein ligase that promotes accumulation of 'Lys-63'-linked histone H2A and H2AX at DNA damage sites. Inhibits RNF168 independently of ubiquitin thioesterase activity by binding and inhibiting UBE2N/UBC13, the E2 partner of RNF168, thereby limiting spreading of 'Lys-63'-linked histone H2A and H2AX marks. Inhibition occurs by binding to free ubiquitin: free ubiquitin acts as an allosteric regulator that increases affinity for UBE2N/UBC13 and disrupts interaction with UBE2V1. The OTUB1-UBE2N/UBC13-free ubiquitin complex adopts a configuration that mimics a cleaved 'Lys48'-linked di-ubiquitin chain. Acts as a regulator of mTORC1 and mTORC2 complexes. When phosphorylated at Tyr-26, acts as an activator of the mTORC1 complex by mediating deubiquitination of RPTOR via a non-catalytic process: acts by binding and inhibiting the activity of the ubiquitin-conjugating enzyme E2 (UBE2D1/UBCH5A, UBE2W/UBC16 and UBE2N/UBC13), thereby preventing ubiquitination of RPTOR. Can also act as an inhibitor of the mTORC1 and mTORC2 complexes in response to amino acids by mediating non-catalytic deubiquitination of DEPTOR. The sequence is that of Ubiquitin thioesterase OTUB1 (Otub1) from Mus musculus (Mouse).